A 194-amino-acid chain; its full sequence is Phosphoheptose isomerase (194 aa).

In terms of domain architecture, SIS spans 31 to 186 (ICQRFQAGNK…CEQVESRLFA (156 aa)). 46–48 (NGG) lines the substrate pocket. Positions 55 and 59 each coordinate Zn(2+). Substrate contacts are provided by residues Glu59, 88 to 89 (ND), 114 to 116 (STS), Ser119, and Gln166. Zn(2+) contacts are provided by Gln166 and His174.

Belongs to the SIS family. GmhA subfamily. The cofactor is Zn(2+).

Its subcellular location is the cytoplasm. The enzyme catalyses 2 D-sedoheptulose 7-phosphate = D-glycero-alpha-D-manno-heptose 7-phosphate + D-glycero-beta-D-manno-heptose 7-phosphate. It functions in the pathway carbohydrate biosynthesis; D-glycero-D-manno-heptose 7-phosphate biosynthesis; D-glycero-alpha-D-manno-heptose 7-phosphate and D-glycero-beta-D-manno-heptose 7-phosphate from sedoheptulose 7-phosphate: step 1/1. Its function is as follows. Catalyzes the isomerization of sedoheptulose 7-phosphate in D-glycero-D-manno-heptose 7-phosphate. This is Phosphoheptose isomerase from Synechocystis sp. (strain ATCC 27184 / PCC 6803 / Kazusa).